Here is a 150-residue protein sequence, read N- to C-terminus: Peptide deformylase 2 (150 aa).

The Fe cation site is built by Cys89 and His131. The active site involves Glu132. His135 provides a ligand contact to Fe cation.

This sequence belongs to the polypeptide deformylase family. It depends on Fe(2+) as a cofactor.

The enzyme catalyses N-terminal N-formyl-L-methionyl-[peptide] + H2O = N-terminal L-methionyl-[peptide] + formate. Functionally, removes the formyl group from the N-terminal Met of newly synthesized proteins. Requires at least a dipeptide for an efficient rate of reaction. N-terminal L-methionine is a prerequisite for activity but the enzyme has broad specificity at other positions. This chain is Peptide deformylase 2, found in Clostridium acetobutylicum (strain ATCC 824 / DSM 792 / JCM 1419 / IAM 19013 / LMG 5710 / NBRC 13948 / NRRL B-527 / VKM B-1787 / 2291 / W).